A 682-amino-acid chain; its full sequence is MTTQPRKILVTCALPYANGAIHLGHMLEHIQADIWVRFQRMRGNKIHFVCADDAHGTPIMLNADKLGITPEELIAKAKADHIRDFAGFNISFDNYHSTHSEENKQLTAEIYNKLKANGFIKSKVISQLFDPEKNMFLPDRFVKGTCPKCKAEDQYGDNCEVCASTYSPMDLINPRSAVSGTTPIVKESEHFFFDLPAFEGMLKEWTRSGSLQSEIANKMQEWFESGLQQWDISRDAPYFGFEIPGAKDKFFYVWLDAPIGYMASFKNLCNREGIDFNEFWAEGSDAELYHFIGKDIVYFHSLFWPAMLEGSGYRKPTNVFAHGYVTVDGAKMSKSRGTFIQASTYLNHIDPECLRYYYAAKLNDRIEDLDFNLDDFVQRVNTDIVNKLVNLASRNAGFIAKRFESKLADKLEDESLFAEFTAQAEQIAAYYESREYNKAIREIMALTDKANKYIDEKAPWVIAKEEGKEAELQAVCSMGIELFRVLMSYLKPVLPKLAERAEAFLQAELRWDNIHQPLLGHTLAPFKALFSRLEKKQIDAVVEETKALFAAANKAAEKTEAKPTALSAVEPIAETITIDDFAKLDMRVAKVLKCEAVPESNKLLRFELDLGDHTRQVFSGIKAAYNKPEELEGRFVIMVANLAPRKMKFGVSEGMILSAGTGGSDLFLLSADNGVTAGMQVK.

The 'HIGH' region signature appears at 15–25 (PYANGAIHLGH). Zn(2+)-binding residues include Cys146, Cys149, Cys159, and Cys162. A 'KMSKS' region motif is present at residues 331–335 (KMSKS). Lys334 contacts ATP. A tRNA-binding domain is found at 580 to 682 (DFAKLDMRVA…NGVTAGMQVK (103 aa)).

The protein belongs to the class-I aminoacyl-tRNA synthetase family. MetG type 1 subfamily. Homodimer. It depends on Zn(2+) as a cofactor.

It is found in the cytoplasm. It carries out the reaction tRNA(Met) + L-methionine + ATP = L-methionyl-tRNA(Met) + AMP + diphosphate. Is required not only for elongation of protein synthesis but also for the initiation of all mRNA translation through initiator tRNA(fMet) aminoacylation. The protein is Methionine--tRNA ligase of Haemophilus influenzae (strain PittGG).